Consider the following 583-residue polypeptide: L-galactono-1,4-lactone dehydrogenase 2, mitochondrial (583 aa).

The transit peptide at 1 to 36 (MRRLLLAGILRRASSSPSSHHHLHLVRALSASSPLP) directs the protein to the mitochondrion. The propeptide at 37-78 (ASDADLRKYAGYALLLLGCGAATYYSFPLPPDALHKKAVPFK) is removed in mature form. The chain crosses the membrane as a helical span at residues 45–61 (YAGYALLLLGCGAATYY). The region spanning 95 to 266 (THEVHTRVLL…AEVTLQCVER (172 aa)) is the FAD-binding PCMH-type domain.

FAD is required as a cofactor.

The protein localises to the mitochondrion membrane. It carries out the reaction L-galactono-1,4-lactone + 4 Fe(III)-[cytochrome c] = L-dehydroascorbate + 4 Fe(II)-[cytochrome c] + 5 H(+). It participates in cofactor biosynthesis; L-ascorbate biosynthesis. Functionally, involved in the biosynthesis of ascorbic acid. This Oryza sativa subsp. japonica (Rice) protein is L-galactono-1,4-lactone dehydrogenase 2, mitochondrial (GLDH2).